The primary structure comprises 54 residues: VILLLITSTPSVDARLKAKDNMPLASFHDNAKRTLQTRLINTRCCPGKPCCRIG.

An N-terminal signal peptide occupies residues 1-14; sequence VILLLITSTPSVDA. Residues 15 to 42 constitute a propeptide that is removed on maturation; sequence RLKAKDNMPLASFHDNAKRTLQTRLINT. P49 is subject to 4-hydroxyproline. I53 carries the isoleucine amide modification.

This sequence belongs to the conotoxin T superfamily. Contains 2 disulfide bonds that can be either 'C1-C3, C2-C4' or 'C1-C4, C2-C3', since these disulfide connectivities have been observed for conotoxins with cysteine framework V (for examples, see AC P0DQQ7 and AC P81755). In terms of tissue distribution, expressed by the venom duct.

The protein resides in the secreted. In Conus victoriae (Queen Victoria cone), this protein is Conotoxin vc5a.